A 391-amino-acid polypeptide reads, in one-letter code: uncharacterized protein (391 aa).

This is an uncharacterized protein from Methanocaldococcus jannaschii (strain ATCC 43067 / DSM 2661 / JAL-1 / JCM 10045 / NBRC 100440) (Methanococcus jannaschii).